A 103-amino-acid chain; its full sequence is Large ribosomal subunit protein uL23 (103 aa).

The protein belongs to the universal ribosomal protein uL23 family. As to quaternary structure, part of the 50S ribosomal subunit. Contacts protein L29, and trigger factor when it is bound to the ribosome.

Functionally, one of the early assembly proteins it binds 23S rRNA. One of the proteins that surrounds the polypeptide exit tunnel on the outside of the ribosome. Forms the main docking site for trigger factor binding to the ribosome. This is Large ribosomal subunit protein uL23 from Chlorobium phaeovibrioides (strain DSM 265 / 1930) (Prosthecochloris vibrioformis (strain DSM 265)).